The primary structure comprises 474 residues: 3-isopropylmalate dehydratase large subunit (474 aa).

Cysteine 355, cysteine 415, and cysteine 418 together coordinate [4Fe-4S] cluster.

This sequence belongs to the aconitase/IPM isomerase family. LeuC type 1 subfamily. As to quaternary structure, heterodimer of LeuC and LeuD. [4Fe-4S] cluster is required as a cofactor.

The catalysed reaction is (2R,3S)-3-isopropylmalate = (2S)-2-isopropylmalate. The protein operates within amino-acid biosynthesis; L-leucine biosynthesis; L-leucine from 3-methyl-2-oxobutanoate: step 2/4. Catalyzes the isomerization between 2-isopropylmalate and 3-isopropylmalate, via the formation of 2-isopropylmaleate. The polypeptide is 3-isopropylmalate dehydratase large subunit (Shewanella oneidensis (strain ATCC 700550 / JCM 31522 / CIP 106686 / LMG 19005 / NCIMB 14063 / MR-1)).